The following is a 305-amino-acid chain: Coiled-coil domain-containing protein 69-A (305 aa).

Residue Gly-2 is the site of N-myristoyl glycine attachment. The interval 13–38 (LRKKKRQKAHQGGLTSQELNDLNAKT) is disordered. Over residues 25-38 (GLTSQELNDLNAKT) the composition is skewed to polar residues. Positions 42–281 (NEVLQKIKEY…QREKEQNLYR (240 aa)) form a coiled coil.

Belongs to the CCDC69 family.

It localises to the cytoplasm. It is found in the cytoskeleton. The protein resides in the spindle. The protein localises to the midbody. In terms of biological role, may act as a scaffold to regulate the recruitment and assembly of spindle midzone components. The polypeptide is Coiled-coil domain-containing protein 69-A (ccdc69-a) (Xenopus laevis (African clawed frog)).